The following is a 391-amino-acid chain: Phosphoglycerate kinase (391 aa).

Substrate is bound by residues 21–23 (DLN), arginine 36, 59–62 (HLGR), arginine 113, and arginine 146. Residues lysine 197, glutamate 319, and 345-348 (GGDT) contribute to the ATP site.

The protein belongs to the phosphoglycerate kinase family. Monomer.

The protein resides in the cytoplasm. The catalysed reaction is (2R)-3-phosphoglycerate + ATP = (2R)-3-phospho-glyceroyl phosphate + ADP. It participates in carbohydrate degradation; glycolysis; pyruvate from D-glyceraldehyde 3-phosphate: step 2/5. This chain is Phosphoglycerate kinase, found in Shewanella baltica (strain OS155 / ATCC BAA-1091).